Here is a 231-residue protein sequence, read N- to C-terminus: Octanoyl-[acyl-carrier-protein]:protein N-octanoyltransferase LIPT2, mitochondrial (231 aa).

A mitochondrion-targeting transit peptide spans 1-31 (MRQPAVRLVRLGRVPYAELLGLQDRWLRRLQ). Positions 41-224 (GTEAGALLLC…AFKEIYKCTL (184 aa)) constitute a BPL/LPL catalytic domain. Residues 85 to 92 (RGGLATFH), 154 to 156 (AIG), and 167 to 169 (GLA) each bind substrate. Cys-185 acts as the Acyl-thioester intermediate in catalysis.

This sequence belongs to the LipB family.

The protein localises to the mitochondrion. It carries out the reaction octanoyl-[ACP] + L-lysyl-[protein] = N(6)-octanoyl-L-lysyl-[protein] + holo-[ACP] + H(+). It participates in protein modification; protein lipoylation via endogenous pathway; protein N(6)-(lipoyl)lysine from octanoyl-[acyl-carrier-protein]: step 1/2. Functionally, catalyzes the transfer of endogenously produced octanoic acid from octanoyl-acyl-carrier-protein (octanoyl-ACP) onto the lipoyl domains of lipoate-dependent enzymes such as the protein H of the glycine cleavage system (GCSH). Lipoyl-ACP can also act as a substrate although octanoyl-ACP is likely to be the physiological substrate. This is Octanoyl-[acyl-carrier-protein]:protein N-octanoyltransferase LIPT2, mitochondrial from Homo sapiens (Human).